Here is a 342-residue protein sequence, read N- to C-terminus: Glyceraldehyde-3-phosphate dehydrogenase (342 aa).

NAD(+) contacts are provided by residues 12–13 (RI), Asp-34, Lys-78, and Thr-120. Residues 151–153 (SCT) and Thr-182 each bind D-glyceraldehyde 3-phosphate. Cys-152 serves as the catalytic Nucleophile. An NAD(+)-binding site is contributed by Asn-183. D-glyceraldehyde 3-phosphate contacts are provided by residues Arg-197, 210 to 211 (TG), and Arg-233. Asn-322 contributes to the NAD(+) binding site.

Belongs to the glyceraldehyde-3-phosphate dehydrogenase family. As to quaternary structure, homotetramer.

It localises to the cytoplasm. It carries out the reaction D-glyceraldehyde 3-phosphate + phosphate + NAD(+) = (2R)-3-phospho-glyceroyl phosphate + NADH + H(+). The protein operates within carbohydrate degradation; glycolysis; pyruvate from D-glyceraldehyde 3-phosphate: step 1/5. In terms of biological role, catalyzes the oxidative phosphorylation of glyceraldehyde 3-phosphate (G3P) to 1,3-bisphosphoglycerate (BPG) using the cofactor NAD. The first reaction step involves the formation of a hemiacetal intermediate between G3P and a cysteine residue, and this hemiacetal intermediate is then oxidized to a thioester, with concomitant reduction of NAD to NADH. The reduced NADH is then exchanged with the second NAD, and the thioester is attacked by a nucleophilic inorganic phosphate to produce BPG. The polypeptide is Glyceraldehyde-3-phosphate dehydrogenase (gap) (Aquifex aeolicus (strain VF5)).